The following is a 654-amino-acid chain: Probable potassium transport system protein Kup (654 aa).

A run of 13 helical transmembrane segments spans residues 17–37, 40–60, 71–91, 99–119, 137–157, 164–184, 202–222, 240–260, 281–301, 338–358, 369–389, 394–414, and 423–443; these read GILV…LYVM, IIGL…AIFW, VLIT…LYAL, WLII…IITP, INTV…QQFG, FFAP…ILQI, LLSI…CTTG, ISWI…GAYL, LVMP…AAVI, IYIP…VLHF, GLAI…FMIL, WFII…FLIA, and GYVT…WYTA.

It belongs to the HAK/KUP transporter (TC 2.A.72) family.

The protein localises to the cell inner membrane. It carries out the reaction K(+)(in) + H(+)(in) = K(+)(out) + H(+)(out). Functionally, transport of potassium into the cell. Likely operates as a K(+):H(+) symporter. The protein is Probable potassium transport system protein Kup of Flavobacterium psychrophilum (strain ATCC 49511 / DSM 21280 / CIP 103535 / JIP02/86).